The primary structure comprises 940 residues: Isoleucine--tRNA ligase (940 aa).

Positions 58-68 match the 'HIGH' region motif; sequence PYANGSIHIGH. Glutamate 564 is an L-isoleucyl-5'-AMP binding site. Residues 605–609 carry the 'KMSKS' region motif; that stretch reads KMSKS. Lysine 608 contacts ATP. Positions 903, 906, 923, and 926 each coordinate Zn(2+).

Belongs to the class-I aminoacyl-tRNA synthetase family. IleS type 1 subfamily. Monomer. The cofactor is Zn(2+).

It is found in the cytoplasm. The enzyme catalyses tRNA(Ile) + L-isoleucine + ATP = L-isoleucyl-tRNA(Ile) + AMP + diphosphate. Catalyzes the attachment of isoleucine to tRNA(Ile). As IleRS can inadvertently accommodate and process structurally similar amino acids such as valine, to avoid such errors it has two additional distinct tRNA(Ile)-dependent editing activities. One activity is designated as 'pretransfer' editing and involves the hydrolysis of activated Val-AMP. The other activity is designated 'posttransfer' editing and involves deacylation of mischarged Val-tRNA(Ile). This is Isoleucine--tRNA ligase from Shewanella baltica (strain OS195).